The sequence spans 453 residues: mRNA cleavage and polyadenylation factor CLP1 (453 aa).

Residues Glu-31, Lys-70, and 146 to 151 (NSGKTS) each bind ATP.

This sequence belongs to the Clp1 family. Clp1 subfamily. In terms of assembly, component of a pre-mRNA cleavage factor complex. Interacts directly with PCF11.

Its subcellular location is the nucleus. In terms of biological role, required for endonucleolytic cleavage during polyadenylation-dependent pre-mRNA 3'-end formation. The sequence is that of mRNA cleavage and polyadenylation factor CLP1 from Scheffersomyces stipitis (strain ATCC 58785 / CBS 6054 / NBRC 10063 / NRRL Y-11545) (Yeast).